An 88-amino-acid polypeptide reads, in one-letter code: ATP synthase subunit 9, mitochondrial (88 aa).

A run of 2 helical transmembrane segments spans residues 30–50 and 66–86; these read IGLT…ILAV and LGFA…FLIL.

It belongs to the ATPase C chain family. F-type ATPases have 2 components, CF(1) - the catalytic core - and CF(0) - the membrane proton channel. CF(1) has five subunits: alpha(3), beta(3), gamma(1), delta(1), epsilon(1). CF(0) has three main subunits: a, b and c.

The protein localises to the mitochondrion membrane. In terms of biological role, mitochondrial membrane ATP synthase (F(1)F(0) ATP synthase or Complex V) produces ATP from ADP in the presence of a proton gradient across the membrane which is generated by electron transport complexes of the respiratory chain. F-type ATPases consist of two structural domains, F(1) - containing the extramembraneous catalytic core and F(0) - containing the membrane proton channel, linked together by a central stalk and a peripheral stalk. During catalysis, ATP synthesis in the catalytic domain of F(1) is coupled via a rotary mechanism of the central stalk subunits to proton translocation. Part of the complex F(0) domain. A homomeric c-ring of probably 10 subunits is part of the complex rotary element. The sequence is that of ATP synthase subunit 9, mitochondrial (atp9) from Dictyostelium citrinum (Slime mold).